Here is a 387-residue protein sequence, read N- to C-terminus: BarH-like 2 homeobox protein (387 aa).

Disordered stretches follow at residues 1–145 (MTME…FLIK), 157–240 (CAPY…TAFS), and 367–387 (PGGQ…PHPR). Polar residues predominate over residues 7–24 (SGSSFGIDTILSSASSGS). Residues 100–113 (APTQSLQPLPQQQQ) are compositionally biased toward low complexity. A compositionally biased stretch (pro residues) spans 114 to 126 (PLPPQQPPPPPPQ). Low complexity predominate over residues 127–141 (QLGSAASAPRTSTSS). Polar residues predominate over residues 160-178 (YSTSVSSPHHTPKQESNAV). The segment covering 180 to 220 (ESFRPKLEQEDSKTKLDKREDSQSDIKCHGTKEEGDREITS) has biased composition (basic and acidic residues). A DNA-binding region (homeobox) is located at residues 232-291 (PRKARTAFSDHQLNQLERSFERQKYLSVQDRMDLAAALNLTDTQVKTWYQNRRTKWKRQT).

It belongs to the BAR homeobox family.

The protein resides in the nucleus. Its function is as follows. Potential regulator of neural basic helix-loop-helix genes. In Homo sapiens (Human), this protein is BarH-like 2 homeobox protein (BARHL2).